Consider the following 376-residue polypeptide: Aminomethyltransferase (376 aa).

This sequence belongs to the GcvT family. The glycine cleavage system is composed of four proteins: P, T, L and H.

The catalysed reaction is N(6)-[(R)-S(8)-aminomethyldihydrolipoyl]-L-lysyl-[protein] + (6S)-5,6,7,8-tetrahydrofolate = N(6)-[(R)-dihydrolipoyl]-L-lysyl-[protein] + (6R)-5,10-methylene-5,6,7,8-tetrahydrofolate + NH4(+). The glycine cleavage system catalyzes the degradation of glycine. The sequence is that of Aminomethyltransferase from Nostoc sp. (strain PCC 7120 / SAG 25.82 / UTEX 2576).